The primary structure comprises 163 residues: Oocyte-secreted protein 1 (163 aa).

The first 21 residues, 1-21, serve as a signal peptide directing secretion; it reads MKPSSGLRGLLVLFSLTWTCA.

It belongs to the PLAC1 family. As to expression, oocyte-specific.

Its subcellular location is the secreted. Functionally, may be involved in cell differentiation. In Bos taurus (Bovine), this protein is Oocyte-secreted protein 1 (OOSP1).